The following is a 275-amino-acid chain: NH(3)-dependent NAD(+) synthetase (275 aa).

Residue 50 to 57 participates in ATP binding; sequence GISGGVDS. Asp-56 serves as a coordination point for Mg(2+). Residue Arg-147 coordinates deamido-NAD(+). An ATP-binding site is contributed by Thr-167. Glu-172 is a binding site for Mg(2+). Residues Lys-180 and Asp-187 each coordinate deamido-NAD(+). The ATP site is built by Lys-196 and Thr-218. Residue 267–268 participates in deamido-NAD(+) binding; the sequence is HK.

Belongs to the NAD synthetase family. Homodimer.

It catalyses the reaction deamido-NAD(+) + NH4(+) + ATP = AMP + diphosphate + NAD(+) + H(+). Its pathway is cofactor biosynthesis; NAD(+) biosynthesis; NAD(+) from deamido-NAD(+) (ammonia route): step 1/1. Its function is as follows. Catalyzes the ATP-dependent amidation of deamido-NAD to form NAD. Uses ammonia as a nitrogen source. This is NH(3)-dependent NAD(+) synthetase from Pseudomonas savastanoi pv. phaseolicola (strain 1448A / Race 6) (Pseudomonas syringae pv. phaseolicola (strain 1448A / Race 6)).